A 526-amino-acid chain; its full sequence is Peptide chain release factor 3 (526 aa).

The 269-residue stretch at 9–277 folds into the tr-type G domain; sequence DKRRTFAIIS…GIVEWAPKPL (269 aa). GTP-binding positions include 18 to 25, 86 to 90, and 140 to 143; these read SHPDAGKT, DTPGH, and NKLD.

Belongs to the TRAFAC class translation factor GTPase superfamily. Classic translation factor GTPase family. PrfC subfamily.

The protein resides in the cytoplasm. In terms of biological role, increases the formation of ribosomal termination complexes and stimulates activities of RF-1 and RF-2. It binds guanine nucleotides and has strong preference for UGA stop codons. It may interact directly with the ribosome. The stimulation of RF-1 and RF-2 is significantly reduced by GTP and GDP, but not by GMP. The protein is Peptide chain release factor 3 of Shewanella sp. (strain MR-4).